The primary structure comprises 436 residues: Gamma-glutamyl phosphate reductase (436 aa).

This sequence belongs to the gamma-glutamyl phosphate reductase family.

The protein localises to the cytoplasm. It carries out the reaction L-glutamate 5-semialdehyde + phosphate + NADP(+) = L-glutamyl 5-phosphate + NADPH + H(+). Its pathway is amino-acid biosynthesis; L-proline biosynthesis; L-glutamate 5-semialdehyde from L-glutamate: step 2/2. Its function is as follows. Catalyzes the NADPH-dependent reduction of L-glutamate 5-phosphate into L-glutamate 5-semialdehyde and phosphate. The product spontaneously undergoes cyclization to form 1-pyrroline-5-carboxylate. This chain is Gamma-glutamyl phosphate reductase, found in Prochlorococcus marinus (strain MIT 9301).